Here is a 450-residue protein sequence, read N- to C-terminus: Phosphoglucosamine mutase 2 (450 aa).

The active-site Phosphoserine intermediate is the Ser-101. Residues Ser-101, Asp-245, Asp-247, and Asp-249 each coordinate Mg(2+). Ser-101 bears the Phosphoserine mark.

Belongs to the phosphohexose mutase family. Mg(2+) serves as cofactor. Post-translationally, activated by phosphorylation.

The enzyme catalyses alpha-D-glucosamine 1-phosphate = D-glucosamine 6-phosphate. Its function is as follows. Catalyzes the conversion of glucosamine-6-phosphate to glucosamine-1-phosphate. In Shewanella sp. (strain MR-4), this protein is Phosphoglucosamine mutase 2.